Consider the following 438-residue polypeptide: Glycogen synthase (438 aa).

Residue K16 participates in ADP-alpha-D-glucose binding.

This sequence belongs to the glycosyltransferase 1 family. Bacterial/plant glycogen synthase subfamily.

It catalyses the reaction [(1-&gt;4)-alpha-D-glucosyl](n) + ADP-alpha-D-glucose = [(1-&gt;4)-alpha-D-glucosyl](n+1) + ADP + H(+). It functions in the pathway glycan biosynthesis; glycogen biosynthesis. In terms of biological role, synthesizes alpha-1,4-glucan chains using ADP-glucose. The polypeptide is Glycogen synthase (Thermus caldophilus).